Consider the following 433-residue polypeptide: Ribosomal protein uS12 methylthiotransferase RimO (433 aa).

The MTTase N-terminal domain maps to 6 to 122 (QSIFLLSLGC…IISVLGGSYR (117 aa)). The [4Fe-4S] cluster site is built by C15, C51, C85, C146, C150, and C153. In terms of domain architecture, Radical SAM core spans 132–362 (LTPPHYAWLK…MELQESIAAE (231 aa)). Residues 365-432 (RELEGRVMKV…AYELHGRVND (68 aa)) form the TRAM domain.

This sequence belongs to the methylthiotransferase family. RimO subfamily. The cofactor is [4Fe-4S] cluster.

The protein resides in the cytoplasm. It catalyses the reaction L-aspartate(89)-[ribosomal protein uS12]-hydrogen + (sulfur carrier)-SH + AH2 + 2 S-adenosyl-L-methionine = 3-methylsulfanyl-L-aspartate(89)-[ribosomal protein uS12]-hydrogen + (sulfur carrier)-H + 5'-deoxyadenosine + L-methionine + A + S-adenosyl-L-homocysteine + 2 H(+). Its function is as follows. Catalyzes the methylthiolation of an aspartic acid residue of ribosomal protein uS12. The protein is Ribosomal protein uS12 methylthiotransferase RimO of Prosthecochloris aestuarii (strain DSM 271 / SK 413).